The chain runs to 113 residues: MLVNSYELMVILRPDLNEERVSQEVTKYQEFLTNNAAEEVSVKVWGKRRLAYQIRRFNDGIYVLFNFNGEGQQIALIERDMRLNDNVMRFLSIKLTPEKPEKEKKAKAVAVEA.

The protein belongs to the bacterial ribosomal protein bS6 family.

In terms of biological role, binds together with bS18 to 16S ribosomal RNA. This chain is Small ribosomal subunit protein bS6 (rpsF), found in Synechocystis sp. (strain ATCC 27184 / PCC 6803 / Kazusa).